We begin with the raw amino-acid sequence, 565 residues long: Effector protease OspD3 (565 aa).

This sequence belongs to the Toxin_15 family.

The protein localises to the secreted. In terms of biological role, effector protease that disrupts necroptosis in host cells by mediating proteolytic cleavage of host RIPK1 and RIPK3. The sequence is that of Effector protease OspD3 from Shigella flexneri.